Reading from the N-terminus, the 177-residue chain is Large ribosomal subunit protein uL10 (177 aa).

The protein belongs to the universal ribosomal protein uL10 family. Part of the ribosomal stalk of the 50S ribosomal subunit. The N-terminus interacts with L11 and the large rRNA to form the base of the stalk. The C-terminus forms an elongated spine to which L12 dimers bind in a sequential fashion forming a multimeric L10(L12)X complex.

Its function is as follows. Forms part of the ribosomal stalk, playing a central role in the interaction of the ribosome with GTP-bound translation factors. The protein is Large ribosomal subunit protein uL10 of Leptospira borgpetersenii serovar Hardjo-bovis (strain JB197).